The primary structure comprises 446 residues: tRNA-2-methylthio-N(6)-dimethylallyladenosine synthase (446 aa).

The MTTase N-terminal domain occupies 5 to 121 (KYLYVETFGC…LPEIVRAAER (117 aa)). [4Fe-4S] cluster is bound by residues cysteine 14, cysteine 50, cysteine 84, cysteine 159, cysteine 163, and cysteine 166. The Radical SAM core domain maps to 145–375 (GEGGVTRFVT…QTLQQQMKRE (231 aa)). A TRAM domain is found at 378–440 (ISFVGTRQLV…QNSLLGEIVT (63 aa)).

The protein belongs to the methylthiotransferase family. MiaB subfamily. Monomer. It depends on [4Fe-4S] cluster as a cofactor.

It is found in the cytoplasm. It catalyses the reaction N(6)-dimethylallyladenosine(37) in tRNA + (sulfur carrier)-SH + AH2 + 2 S-adenosyl-L-methionine = 2-methylsulfanyl-N(6)-dimethylallyladenosine(37) in tRNA + (sulfur carrier)-H + 5'-deoxyadenosine + L-methionine + A + S-adenosyl-L-homocysteine + 2 H(+). Its function is as follows. Catalyzes the methylthiolation of N6-(dimethylallyl)adenosine (i(6)A), leading to the formation of 2-methylthio-N6-(dimethylallyl)adenosine (ms(2)i(6)A) at position 37 in tRNAs that read codons beginning with uridine. This is tRNA-2-methylthio-N(6)-dimethylallyladenosine synthase from Geobacter sulfurreducens (strain ATCC 51573 / DSM 12127 / PCA).